Here is a 306-residue protein sequence, read N- to C-terminus: Protoheme IX farnesyltransferase (306 aa).

8 helical membrane-spanning segments follow: residues 31 to 50 (VIEL…QGGW), 55 to 77 (LILG…NCYI), 104 to 124 (LVFA…ISNW), 125 to 145 (LAAA…TLWL), 168 to 188 (WAAV…IVFL), 218 to 235 (GRAA…ATLA), 238 to 258 (LLLI…LAGG), and 286 to 306 (ASIS…LLPF).

Belongs to the UbiA prenyltransferase family. Protoheme IX farnesyltransferase subfamily.

The protein localises to the cell membrane. It carries out the reaction heme b + (2E,6E)-farnesyl diphosphate + H2O = Fe(II)-heme o + diphosphate. The protein operates within porphyrin-containing compound metabolism; heme O biosynthesis; heme O from protoheme: step 1/1. Functionally, converts heme B (protoheme IX) to heme O by substitution of the vinyl group on carbon 2 of heme B porphyrin ring with a hydroxyethyl farnesyl side group. The chain is Protoheme IX farnesyltransferase from Clavibacter sepedonicus (Clavibacter michiganensis subsp. sepedonicus).